The chain runs to 347 residues: DnaJ homolog subfamily C member 22 (347 aa).

The TM2 domain maps to 4-50; sequence GLLMTYTLWAVGGPAGLHHLYLGRDSHALLWMLTLGGGGLGWLWEFW. 7 consecutive transmembrane segments (helical) span residues 5-25, 32-52, 81-101, 105-125, 135-155, 186-206, and 218-238; these read LLMTYTLWAVGGPAGLHHLYL, LLWMLTLGGGGLGWLWEFWML, FVAQMIVGMYFGLVALISLSF, FYIVGLPLAVGLGVLLVAAVG, LGAAFLTSPIFYGRPIAILPI, GLAYLAFTGPLVHSVLCHTAV, and FLSWFSFFPLLGRLLESVLLL. The J domain occupies 277 to 347; the sequence is LALQVFGLSE…GSWRWEETSF (71 aa).

It localises to the membrane. Its function is as follows. May function as a co-chaperone. This is DnaJ homolog subfamily C member 22 (DNAJC22) from Bos taurus (Bovine).